A 409-amino-acid chain; its full sequence is MSQAEFPITPEVEADLRIARRGCDELLVESEFARKLARSRATGVPLRIKLGLDPTAPDIHLGHTVVLNKMRQLQDLGHTVIFLIGDFTSTIGDPSGRNSTRPPLTREQIEHNAKTYYAQASLVLDPARTEIRYNSEWCDPLGARGMIQLASRYTVARMMEREDFTRRFKTGVPIAVHEFLYPLMQGYDSVALKADLELGGTDQKFNLLVGRELQKEYGQEPQCILTMPLLVGTDGVDKMSKSKGNYIGISESPDSMFGKLMSISDTLMWRYFELLSFRSLEDIAALKAEIDAGRNPRDAKVALAQEIITRFHSAKDAEQALANFEARFRDGAIPDDIPEVNLAGAPMGILHVLRASSLCASSSEAQRAIEQGGVKIDGAKIEDRSLQLNAGSYVLQVGKRKFARVNLAV.

The short motif at 54–63 is the 'HIGH' region element; that stretch reads PTAPDIHLGH. The 'KMSKS' region motif lies at 238–242; sequence KMSKS. Lys241 serves as a coordination point for ATP. An S4 RNA-binding domain is found at 347-407; sequence MGILHVLRAS…GKRKFARVNL (61 aa).

It belongs to the class-I aminoacyl-tRNA synthetase family. TyrS type 2 subfamily. As to quaternary structure, homodimer.

It localises to the cytoplasm. The enzyme catalyses tRNA(Tyr) + L-tyrosine + ATP = L-tyrosyl-tRNA(Tyr) + AMP + diphosphate + H(+). Catalyzes the attachment of tyrosine to tRNA(Tyr) in a two-step reaction: tyrosine is first activated by ATP to form Tyr-AMP and then transferred to the acceptor end of tRNA(Tyr). The protein is Tyrosine--tRNA ligase of Bordetella avium (strain 197N).